A 368-amino-acid polypeptide reads, in one-letter code: tRNA/tmRNA (uracil-C(5))-methyltransferase (368 aa).

Positions 186, 214, 219, 235, and 295 each coordinate S-adenosyl-L-methionine. The Nucleophile role is filled by Cys-320. The active-site Proton acceptor is Glu-354.

This sequence belongs to the class I-like SAM-binding methyltransferase superfamily. RNA M5U methyltransferase family. TrmA subfamily.

The catalysed reaction is uridine(54) in tRNA + S-adenosyl-L-methionine = 5-methyluridine(54) in tRNA + S-adenosyl-L-homocysteine + H(+). The enzyme catalyses uridine(341) in tmRNA + S-adenosyl-L-methionine = 5-methyluridine(341) in tmRNA + S-adenosyl-L-homocysteine + H(+). In terms of biological role, dual-specificity methyltransferase that catalyzes the formation of 5-methyluridine at position 54 (m5U54) in all tRNAs, and that of position 341 (m5U341) in tmRNA (transfer-mRNA). This Aromatoleum aromaticum (strain DSM 19018 / LMG 30748 / EbN1) (Azoarcus sp. (strain EbN1)) protein is tRNA/tmRNA (uracil-C(5))-methyltransferase.